We begin with the raw amino-acid sequence, 61 residues long: Small ribosomal subunit protein uS14 (61 aa).

The Zn(2+) site is built by C24, C27, C40, and C43.

It belongs to the universal ribosomal protein uS14 family. Zinc-binding uS14 subfamily. Part of the 30S ribosomal subunit. Contacts proteins S3 and S10. The cofactor is Zn(2+).

Functionally, binds 16S rRNA, required for the assembly of 30S particles and may also be responsible for determining the conformation of the 16S rRNA at the A site. In Frankia casuarinae (strain DSM 45818 / CECT 9043 / HFP020203 / CcI3), this protein is Small ribosomal subunit protein uS14.